Here is a 231-residue protein sequence, read N- to C-terminus: Fibronectin type III domain-containing protein 4 (231 aa).

The signal sequence occupies residues 1 to 40 (MPLAPPANSVETMASLMPLSPYLSPTVLLLVSCDLGFVRA). Over 41–163 (DRPPSPVNVT…GLDGERPLQT (123 aa)) the chain is Extracellular. A Fibronectin type-III domain is found at 43 to 136 (PPSPVNVTVT…PRVHFRTLKG (94 aa)). Asn48 and Asn143 each carry an N-linked (GlcNAc...) asparagine glycan. The tract at residues 118 to 156 (GLRGESPPGPRVHFRTLKGSDRLPSNSSSPGDITVEGLD) is disordered. The helical transmembrane segment at 164–184 (GEVVIIVVVLLMWAAVIGLFC) threads the bilayer. At 185–231 (RQYDIIKDNDSNNNPKEKGKGPEQSPQGRPVGTTRQKKSPSINTIDV) the chain is on the cytoplasmic side. The span at 193 to 205 (NDSNNNPKEKGKG) shows a compositional bias: basic and acidic residues. Residues 193–231 (NDSNNNPKEKGKGPEQSPQGRPVGTTRQKKSPSINTIDV) form a disordered region.

As to expression, predominantly expressed in the liver and in the brain, including in the cortex, hypothalamus and hippocampus. Also expressed in heart, lung, kidney and testis. In the colon, expressed in the epithelium and in a subset of immune cells in lymphoid aggregates.

The protein localises to the membrane. It localises to the secreted. Functionally, has anti-inflammatory properties. In the colon, acts on macrophages to down-regulate inflammation. May suppress osteoclastogenesis and mature osteoclast resorptive function. In white adipose tissue, decreases local inflammation, via interaction with GPR116. Also required for proper systemic glucose tolerance, specifically sensitizing white adipocytes to insulin and promoting glucose uptake. The insulin sensitizing function in adipose tissue is mediated by interaction with ADGRF5/GPR116 and activation of cAMP signaling. The sequence is that of Fibronectin type III domain-containing protein 4 (Fndc4) from Mus musculus (Mouse).